The chain runs to 742 residues: Synaptic vesicle glycoprotein 2A (742 aa).

The interval 1-57 (MEEGFRDRAAFIRGAKDIAKEVKKHATKKVVKGLDRVQDEYSRRSYSRFEEEDDDDD) is interaction with SYT1. Residues 1-169 (MEEGFRDRAA…GHGRFQWTLY (169 aa)) are Cytoplasmic-facing. Residues 32–49 (KGLDRVQDEYSRRSYSRF) are compositionally biased toward basic and acidic residues. Residues 32 to 144 (KGLDRVQDEY…GRGEAQRRKE (113 aa)) form a disordered region. 2 positions are modified to phosphoserine: serine 80 and serine 81. Threonine 84 is subject to Phosphothreonine. Gly residues predominate over residues 122–137 (VRGGLGDGEGPPGGRG). A helical transmembrane segment spans residues 170 to 190 (FVLGLALMADGVEVFVVGFVL). The Extracellular portion of the chain corresponds to 191–205 (PSAEKDMCLSDSNKG). Residues 206-226 (MLGLIVYLGMMVGAFLWGGLA) form a helical membrane-spanning segment. Residues 227 to 233 (DRLGRRQ) lie on the Cytoplasmic side of the membrane. The chain crosses the membrane as a helical span at residues 234–254 (CLLISLSVNSVFAFFSSFVQG). Residues 255–262 (YGTFLFCR) are Extracellular-facing. The chain crosses the membrane as a helical span at residues 263–283 (LLSGVGIGGSIPIVFSYFSEF). Topologically, residues 284 to 294 (LAQEKRGEHLS) are cytoplasmic. Residues 295–315 (WLCMFWMIGGVYAAAMAWAII) form a helical membrane-spanning segment. Over 316 to 334 (PHYGWSFQMGSAYQFHSWR) the chain is Extracellular. The chain crosses the membrane as a helical span at residues 335-355 (VFVLVCAFPSVFAIGALTTQP). Residues 356–447 (ESPRFFLENG…CFGPEYRRIT (92 aa)) are Cytoplasmic-facing. Position 393 is a phosphoserine (serine 393). The helical transmembrane segment at 448–468 (LMMMGVWFTMSFSYYGLTVWF) threads the bilayer. Topologically, residues 469–598 (PDMIRHLQAV…GTGEGAYMVY (130 aa)) are extracellular. Tyrosine 480 carries the phosphotyrosine modification. 3 N-linked (GlcNAc...) asparagine glycosylation sites follow: asparagine 498, asparagine 548, and asparagine 573. A helical membrane pass occupies residues 599-619 (FVSFLGTLAVLPGNIVSALLM). The Cytoplasmic portion of the chain corresponds to 620-626 (DKIGRLR). Residues 627 to 647 (MLAGSSVMSCVSCFFLSFGNS) form a helical membrane-spanning segment. Topologically, residues 648-651 (ESAM) are extracellular. Residues 652–672 (IALLCLFGGVSIASWNALDVL) form a helical membrane-spanning segment. The Cytoplasmic segment spans residues 673-685 (TVELYPSDKRTTA). Residues 686-708 (FGFLNALCKLAAVLGISIFTSFV) form a helical membrane-spanning segment. The Extracellular portion of the chain corresponds to 709–712 (GITK). Residues 713-731 (AAPILFASAALALGSSLAL) traverse the membrane as a helical segment. The Cytoplasmic segment spans residues 732-742 (KLPETRGQVLQ).

This sequence belongs to the major facilitator superfamily. In terms of assembly, interacts with SYT1/synaptotagmin-1 in a calcium-dependent manner. Binds the adapter protein complex AP-2. Phosphorylation by CK1 of the N-terminal cytoplasmic domain regulates interaction with SYT1. Post-translationally, N-glycosylated.

It localises to the presynapse. Its subcellular location is the cytoplasmic vesicle. The protein resides in the secretory vesicle. The protein localises to the synaptic vesicle membrane. Its function is as follows. Plays a role in the control of regulated secretion in neural and endocrine cells, enhancing selectively low-frequency neurotransmission. Positively regulates vesicle fusion by maintaining the readily releasable pool of secretory vesicles. The chain is Synaptic vesicle glycoprotein 2A (SV2A) from Bos taurus (Bovine).